Reading from the N-terminus, the 355-residue chain is Replication-associated protein (355 aa).

Positions 11–114 (SHRNVNTFLT…PLAVFERGTF (104 aa)) constitute a CRESS-DNA virus Rep endonuclease domain. The short motif at 18–21 (FLTY) is the RCR-1 element. A divalent metal cation is bound by residues glutamate 52, histidine 60, and histidine 62. Residues 60-62 (HLH) carry the RCR-2 motif. Tyrosine 100 acts as the For DNA cleavage activity in catalysis. The RCR-3 signature appears at 100 to 103 (YILK). Position 104 (glutamate 104) interacts with a divalent metal cation. Positions 119-128 (SSFQGNPSKG) are enriched in polar residues. Residues 119-138 (SSFQGNPSKGNSEKKPSKDE) form a disordered region. Over residues 129–138 (NSEKKPSKDE) the composition is skewed to basic and acidic residues. The segment at 175 to 187 (SANKLFPEIQEEF) is oligomerization. 229-236 (GPTRTGKS) lines the ATP pocket. The interval 252–270 (VDWSSYNEDAIYNIVDDIP) is transactivation. The Nuclear localization signal signature appears at 292 to 303 (KYGKKKKVQMKS).

The protein belongs to the geminiviridae Rep protein family. Homooligomer. Rep binds to repeated DNA motifs (iterons). Forms the O-complex, which is a Rep-DNA complex involved in the initiation of RCR. Part of the C- and V-complexes which are RepA-Rep-DNA complexes involved in the c-sense and v-sense transcription. Mg(2+) serves as cofactor. It depends on Mn(2+) as a cofactor.

It localises to the host nucleus. In terms of biological role, essential for the replication of viral ssDNA. The closed circular ssDNA genome is first converted to a superhelical dsDNA. Rep binds a specific region at the genome origin of replication. It introduces an endonucleolytic nick within the conserved sequence 5'-TAATATTAC-3' in the intergenic region of the genome present in all geminiviruses, thereby initiating the rolling circle replication (RCR). Following cleavage, binds covalently to the 5'-phosphate of DNA as a tyrosyl ester. The cleavage gives rise to a free 3'-OH that serves as a primer for the cellular DNA polymerase. The polymerase synthesizes the (+) strand DNA by rolling circle mechanism. After one round of replication, a Rep-catalyzed nucleotidyl transfer reaction releases a circular single-stranded virus genome, thereby terminating the replication. Displays origin-specific DNA cleavage, nucleotidyl transferase, ATPase and helicase activities. Acts as an inhibitor of C-sense gene transcription. In Maize streak virus genotype B (isolate Tas) (MSV), this protein is Replication-associated protein.